We begin with the raw amino-acid sequence, 203 residues long: ATP-dependent Clp protease proteolytic subunit (203 aa).

The active-site Nucleophile is the S107. Residue H132 is part of the active site.

This sequence belongs to the peptidase S14 family. Fourteen ClpP subunits assemble into 2 heptameric rings which stack back to back to give a disk-like structure with a central cavity, resembling the structure of eukaryotic proteasomes.

Its subcellular location is the cytoplasm. It catalyses the reaction Hydrolysis of proteins to small peptides in the presence of ATP and magnesium. alpha-casein is the usual test substrate. In the absence of ATP, only oligopeptides shorter than five residues are hydrolyzed (such as succinyl-Leu-Tyr-|-NHMec, and Leu-Tyr-Leu-|-Tyr-Trp, in which cleavage of the -Tyr-|-Leu- and -Tyr-|-Trp bonds also occurs).. Its function is as follows. Cleaves peptides in various proteins in a process that requires ATP hydrolysis. Has a chymotrypsin-like activity. Plays a major role in the degradation of misfolded proteins. This Shewanella piezotolerans (strain WP3 / JCM 13877) protein is ATP-dependent Clp protease proteolytic subunit.